Reading from the N-terminus, the 832-residue chain is Mucosa-associated lymphoid tissue lymphoma translocation protein 1 homolog (832 aa).

A disordered region spans residues 1-39 (MSLWGQPLQASPPLAVRQPPTASSGPSTSPPAGATLNRL). Position 2 is an N-acetylserine (Ser2). Positions 19 to 39 (PPTASSGPSTSPPAGATLNRL) are enriched in low complexity. Positions 45-132 (RRLSESLDRA…EVLPLLNPPG (88 aa)) constitute a Death domain. Ig-like C2-type domains lie at 131–207 (PGLK…FEFS) and 218–314 (AEVT…KKAE). Ser141 is modified (phosphoserine). Disulfide bonds link Cys154–Cys196 and Cys257–Cys299. Residues 356–570 (IGNMSYWEHP…SLSEKRALTD (215 aa)) are caspase-like. A Nuclear export signal motif is present at residues 377-384 (LTNLLRQL). Catalysis depends on residues His423 and Cys472.

It belongs to the peptidase C14B family. Homooligomer; forms oligomers which bind to TRAF6. Forms a complex with CARD14 and MALT1; resulting in the formation of a CBM (CARD14-BCL10-MALT1) complex. Forms a complex with CARD11 and MALT1; resulting in the formation of a CBM (CARD11-BCL10-MALT1) complex. Forms a complex with CARD9 and MALT1; resulting in the formation of a CBM (CARD9-BCL10-MALT1) complex.

Its subcellular location is the cytoplasm. The protein resides in the perinuclear region. It localises to the nucleus. Protease that enhances BCL10-induced activation: acts via formation of CBM complexes that channel adaptive and innate immune signaling downstream of CARD domain-containing proteins (CARD9, CARD11 and CARD14) to activate NF-kappa-B and MAP kinase p38 pathways which stimulate expression of genes encoding pro-inflammatory cytokines and chemokines. Mediates BCL10 cleavage: MALT1-dependent BCL10 cleavage plays an important role in T-cell antigen receptor-induced integrin adhesion. Involved in the induction of T helper 17 cells (Th17) differentiation. Cleaves RC3H1 and ZC3H12A in response to T-cell receptor (TCR) stimulation which releases their cooperatively repressed targets to promote Th17 cell differentiation. Also mediates cleavage of N4BP1 in T-cells following TCR-mediated activation, leading to N4BP1 inactivation. May also have ubiquitin ligase activity: binds to TRAF6, inducing TRAF6 oligomerization and activation of its ligase activity. This Mus musculus (Mouse) protein is Mucosa-associated lymphoid tissue lymphoma translocation protein 1 homolog.